Here is a 414-residue protein sequence, read N- to C-terminus: Signal recognition particle receptor FtsY (414 aa).

GTP contacts are provided by residues 216–223 (GVNGVGKT), 298–302 (DTAGR), and 362–365 (TKLD).

It belongs to the GTP-binding SRP family. FtsY subfamily. Part of the signal recognition particle protein translocation system, which is composed of SRP and FtsY. SRP is a ribonucleoprotein composed of Ffh and a 4.5S RNA molecule.

The protein localises to the cell inner membrane. The protein resides in the cytoplasm. It catalyses the reaction GTP + H2O = GDP + phosphate + H(+). Its function is as follows. Involved in targeting and insertion of nascent membrane proteins into the cytoplasmic membrane. Acts as a receptor for the complex formed by the signal recognition particle (SRP) and the ribosome-nascent chain (RNC). Interaction with SRP-RNC leads to the transfer of the RNC complex to the Sec translocase for insertion into the membrane, the hydrolysis of GTP by both Ffh and FtsY, and the dissociation of the SRP-FtsY complex into the individual components. The protein is Signal recognition particle receptor FtsY of Haemophilus influenzae (strain ATCC 51907 / DSM 11121 / KW20 / Rd).